The chain runs to 129 residues: Small ribosomal subunit protein uS11 (129 aa).

The protein belongs to the universal ribosomal protein uS11 family. In terms of assembly, part of the 30S ribosomal subunit. Interacts with proteins S7 and S18. Binds to IF-3.

Located on the platform of the 30S subunit, it bridges several disparate RNA helices of the 16S rRNA. Forms part of the Shine-Dalgarno cleft in the 70S ribosome. The chain is Small ribosomal subunit protein uS11 from Nitrosospira multiformis (strain ATCC 25196 / NCIMB 11849 / C 71).